The following is a 191-amino-acid chain: Protein YceI (191 aa).

Positions 1–22 are cleaved as a signal peptide; sequence MKKSLLGLTFASLMFSAGSAVA.

Belongs to the UPF0312 family. Type 1 subfamily.

The protein resides in the periplasm. This is Protein YceI from Escherichia coli O6:H1 (strain CFT073 / ATCC 700928 / UPEC).